Reading from the N-terminus, the 71-residue chain is Prokaryotic ubiquitin-like protein Pup (71 aa).

The segment covering 1–18 has biased composition (low complexity); sequence MATRDSGGQSQTGRSQQG. Residues 1–42 are disordered; the sequence is MATRDSGGQSQTGRSQQGEEIEDVTTEASAEAAERHAEITED. An ARC ATPase binding region spans residues 27–65; that stretch reads EASAEAAERHAEITEDVDDLLDEIDSVLEENAEEFVRGY. A coiled-coil region spans residues 29 to 60; that stretch reads SAEAAERHAEITEDVDDLLDEIDSVLEENAEE. Residue E71 forms an Isoglutamyl lysine isopeptide (Glu-Lys) (interchain with K-? in acceptor proteins) linkage.

Belongs to the prokaryotic ubiquitin-like protein family. Strongly interacts with the proteasome-associated ATPase ARC through a hydrophobic interface; the interacting region of Pup lies in its C-terminal half. There is one Pup binding site per ARC hexamer ring.

Its pathway is protein degradation; proteasomal Pup-dependent pathway. Protein modifier that is covalently attached to lysine residues of substrate proteins, thereby targeting them for proteasomal degradation. The tagging system is termed pupylation. This chain is Prokaryotic ubiquitin-like protein Pup, found in Salinispora tropica (strain ATCC BAA-916 / DSM 44818 / JCM 13857 / NBRC 105044 / CNB-440).